The following is a 907-amino-acid chain: Protein translocase subunit SecA (907 aa).

ATP-binding positions include Gln87, 105–109, and Asp511; that span reads GEGKT. Positions 891, 893, 902, and 903 each coordinate Zn(2+).

This sequence belongs to the SecA family. In terms of assembly, monomer and homodimer. Part of the essential Sec protein translocation apparatus which comprises SecA, SecYEG and auxiliary proteins SecDF-YajC and YidC. Requires Zn(2+) as cofactor.

The protein localises to the cell inner membrane. Its subcellular location is the cytoplasm. The catalysed reaction is ATP + H2O + cellular proteinSide 1 = ADP + phosphate + cellular proteinSide 2.. Its function is as follows. Part of the Sec protein translocase complex. Interacts with the SecYEG preprotein conducting channel. Has a central role in coupling the hydrolysis of ATP to the transfer of proteins into and across the cell membrane, serving both as a receptor for the preprotein-SecB complex and as an ATP-driven molecular motor driving the stepwise translocation of polypeptide chains across the membrane. In Aromatoleum aromaticum (strain DSM 19018 / LMG 30748 / EbN1) (Azoarcus sp. (strain EbN1)), this protein is Protein translocase subunit SecA.